Consider the following 259-residue polypeptide: Gasdermin bGSDM (259 aa).

C3 carries the S-palmitoyl cysteine lipid modification. 4 beta stranded membrane-spanning segments follow: residues 70–86 (FQFRASSILQVGVAASV), 98–116 (SGSFSSAFSSSNADTIQLS), 162–179 (GIRISVADKSKKQVDLSA), and 187–203 (AKAKMELKREDTGSYAF). Residues 244–259 (PFAFIGDDAFVDLPES) form a C-terminal region region.

The protein belongs to the bacterial gasdermin family. As to quaternary structure, monomer in solution. Forms large, homooligomeric ring-shaped pores when inserted in membranes. Palmitoylation helps stabilize the inactive state; may self palmitoylate. Palmitoylation plays a significant role in pore formation.

Its subcellular location is the cytoplasm. The protein resides in the cell inner membrane. With respect to regulation, the full-length protein before cleavage is inactive: intramolecular interactions between the N-terminal domain and the C-terminal region as well as the lipid modification, mediate autoinhibition. The pyroptosis-like-inducing activity is carried by the released N-terminal domain (Gasdermin bGSDM, N-terminus). Precursor of a pore-forming protein involved in defense against bacteriophages. Expression of bGSDM and the neighboring protease gene (Ga0098714_109514) is toxic in E.coli on solid medium. Cleavage of this precursor by its dedicated protease releases the active moiety (gasdermin bGSDM, N-terminus) which inserts into membranes, forming pores and triggering cell death. Functionally, pore-forming protein that causes membrane permeabilization via a pyroptosis-like activity. Makes ring-like pores when released. In Bradyrhizobium tropiciagri, this protein is Gasdermin bGSDM.